Reading from the N-terminus, the 355-residue chain is Uroporphyrinogen decarboxylase (355 aa).

Substrate is bound by residues 23–27, Asp-72, Tyr-148, Ser-203, and His-321; that span reads RQAGR.

The protein belongs to the uroporphyrinogen decarboxylase family. Homodimer.

Its subcellular location is the cytoplasm. The enzyme catalyses uroporphyrinogen III + 4 H(+) = coproporphyrinogen III + 4 CO2. Its pathway is porphyrin-containing compound metabolism; protoporphyrin-IX biosynthesis; coproporphyrinogen-III from 5-aminolevulinate: step 4/4. Catalyzes the decarboxylation of four acetate groups of uroporphyrinogen-III to yield coproporphyrinogen-III. The chain is Uroporphyrinogen decarboxylase from Chloroflexus aurantiacus (strain ATCC 29366 / DSM 635 / J-10-fl).